We begin with the raw amino-acid sequence, 297 residues long: Bifunctional protein FolD 1 (297 aa).

Residues 164 to 166 and Thr230 contribute to the NADP(+) site; that span reads GRS.

It belongs to the tetrahydrofolate dehydrogenase/cyclohydrolase family. Homodimer.

It catalyses the reaction (6R)-5,10-methylene-5,6,7,8-tetrahydrofolate + NADP(+) = (6R)-5,10-methenyltetrahydrofolate + NADPH. The enzyme catalyses (6R)-5,10-methenyltetrahydrofolate + H2O = (6R)-10-formyltetrahydrofolate + H(+). The protein operates within one-carbon metabolism; tetrahydrofolate interconversion. In terms of biological role, catalyzes the oxidation of 5,10-methylenetetrahydrofolate to 5,10-methenyltetrahydrofolate and then the hydrolysis of 5,10-methenyltetrahydrofolate to 10-formyltetrahydrofolate. The polypeptide is Bifunctional protein FolD 1 (Rhodococcus jostii (strain RHA1)).